A 569-amino-acid chain; its full sequence is Proline--tRNA ligase (569 aa).

Belongs to the class-II aminoacyl-tRNA synthetase family. ProS type 1 subfamily. As to quaternary structure, homodimer.

It localises to the cytoplasm. The catalysed reaction is tRNA(Pro) + L-proline + ATP = L-prolyl-tRNA(Pro) + AMP + diphosphate. Catalyzes the attachment of proline to tRNA(Pro) in a two-step reaction: proline is first activated by ATP to form Pro-AMP and then transferred to the acceptor end of tRNA(Pro). As ProRS can inadvertently accommodate and process non-cognate amino acids such as alanine and cysteine, to avoid such errors it has two additional distinct editing activities against alanine. One activity is designated as 'pretransfer' editing and involves the tRNA(Pro)-independent hydrolysis of activated Ala-AMP. The other activity is designated 'posttransfer' editing and involves deacylation of mischarged Ala-tRNA(Pro). The misacylated Cys-tRNA(Pro) is not edited by ProRS. This Shewanella loihica (strain ATCC BAA-1088 / PV-4) protein is Proline--tRNA ligase.